We begin with the raw amino-acid sequence, 245 residues long: 1-(5-phosphoribosyl)-5-[(5-phosphoribosylamino)methylideneamino] imidazole-4-carboxamide isomerase (245 aa).

Residue D7 is the Proton acceptor of the active site. The Proton donor role is filled by D129.

Belongs to the HisA/HisF family.

It localises to the cytoplasm. The catalysed reaction is 1-(5-phospho-beta-D-ribosyl)-5-[(5-phospho-beta-D-ribosylamino)methylideneamino]imidazole-4-carboxamide = 5-[(5-phospho-1-deoxy-D-ribulos-1-ylimino)methylamino]-1-(5-phospho-beta-D-ribosyl)imidazole-4-carboxamide. Its pathway is amino-acid biosynthesis; L-histidine biosynthesis; L-histidine from 5-phospho-alpha-D-ribose 1-diphosphate: step 4/9. The chain is 1-(5-phosphoribosyl)-5-[(5-phosphoribosylamino)methylideneamino] imidazole-4-carboxamide isomerase from Escherichia coli (strain SMS-3-5 / SECEC).